The sequence spans 453 residues: MNIVILAAGTGKRMRSALPKVLHPVAGRPLLSHVIATARTLQPSRLVVVVGHGAEQVRAAVAAPDIQFAVQAEQLGTGHAVRQALPLLDPAQPTLVLYGDVPLTRASTLQRLVDAARDGRYGILTVTLDDPTGYGRIVRDASGFVTRIVEQKDATPDELKIAEINTGIIVTPTAQLAMWLGALKNENAQGEYYLTDVVELAIEAGFEIVTAQPDEEWETLGVNSKAQLAELERIHQRNVADALLADGVTLADPARIDVRGTLRCGRDVSIDVNCVFEGDVTLADNVTIGANCVIRNASVGAGTRIDAFTHIDGAELGAHTVIGPYARLRPGAQLADEAHVGNFVEVKNAVIGHGSKANHLTYIGDADIGARVNIGAGTITCNYDGANKFRTVIEDDVFVGSDTQLVAPVHVGRGVTIAAGTTVWKDVADGVLALNEKTQTAKSGYVRPVKKKS.

Residues 1–225 (MNIVILAAGT…EWETLGVNSK (225 aa)) form a pyrophosphorylase region. Residues 6-9 (LAAG), lysine 20, glutamine 71, 76-77 (GT), 98-100 (YGD), glycine 135, glutamate 150, asparagine 165, and asparagine 223 contribute to the UDP-N-acetyl-alpha-D-glucosamine site. Aspartate 100 is a Mg(2+) binding site. Asparagine 223 contributes to the Mg(2+) binding site. Positions 226-246 (AQLAELERIHQRNVADALLAD) are linker. Residues 247–453 (GVTLADPARI…GYVRPVKKKS (207 aa)) form an N-acetyltransferase region. Positions 329 and 347 each coordinate UDP-N-acetyl-alpha-D-glucosamine. Histidine 359 acts as the Proton acceptor in catalysis. UDP-N-acetyl-alpha-D-glucosamine contacts are provided by tyrosine 362 and asparagine 373. Residues alanine 376, 382-383 (NY), serine 401, and alanine 419 each bind acetyl-CoA.

It in the N-terminal section; belongs to the N-acetylglucosamine-1-phosphate uridyltransferase family. The protein in the C-terminal section; belongs to the transferase hexapeptide repeat family. As to quaternary structure, homotrimer. Mg(2+) is required as a cofactor.

The protein localises to the cytoplasm. It carries out the reaction alpha-D-glucosamine 1-phosphate + acetyl-CoA = N-acetyl-alpha-D-glucosamine 1-phosphate + CoA + H(+). It catalyses the reaction N-acetyl-alpha-D-glucosamine 1-phosphate + UTP + H(+) = UDP-N-acetyl-alpha-D-glucosamine + diphosphate. It functions in the pathway nucleotide-sugar biosynthesis; UDP-N-acetyl-alpha-D-glucosamine biosynthesis; N-acetyl-alpha-D-glucosamine 1-phosphate from alpha-D-glucosamine 6-phosphate (route II): step 2/2. It participates in nucleotide-sugar biosynthesis; UDP-N-acetyl-alpha-D-glucosamine biosynthesis; UDP-N-acetyl-alpha-D-glucosamine from N-acetyl-alpha-D-glucosamine 1-phosphate: step 1/1. Its pathway is bacterial outer membrane biogenesis; LPS lipid A biosynthesis. In terms of biological role, catalyzes the last two sequential reactions in the de novo biosynthetic pathway for UDP-N-acetylglucosamine (UDP-GlcNAc). The C-terminal domain catalyzes the transfer of acetyl group from acetyl coenzyme A to glucosamine-1-phosphate (GlcN-1-P) to produce N-acetylglucosamine-1-phosphate (GlcNAc-1-P), which is converted into UDP-GlcNAc by the transfer of uridine 5-monophosphate (from uridine 5-triphosphate), a reaction catalyzed by the N-terminal domain. This chain is Bifunctional protein GlmU, found in Burkholderia multivorans (strain ATCC 17616 / 249).